We begin with the raw amino-acid sequence, 170 residues long: Adenine phosphoribosyltransferase (170 aa).

This sequence belongs to the purine/pyrimidine phosphoribosyltransferase family. In terms of assembly, homodimer.

The protein localises to the cytoplasm. The enzyme catalyses AMP + diphosphate = 5-phospho-alpha-D-ribose 1-diphosphate + adenine. It functions in the pathway purine metabolism; AMP biosynthesis via salvage pathway; AMP from adenine: step 1/1. Functionally, catalyzes a salvage reaction resulting in the formation of AMP, that is energically less costly than de novo synthesis. The protein is Adenine phosphoribosyltransferase of Fervidobacterium nodosum (strain ATCC 35602 / DSM 5306 / Rt17-B1).